The following is a 469-amino-acid chain: Mannosyl-oligosaccharide 1,2-alpha-mannosidase IA (469 aa).

The Lumenal segment spans residues 1–469; the sequence is REPADAAVRE…DQKEVEVKVK (469 aa). A disulfide bridge connects residues Cys292 and Cys324. An N-linked (GlcNAc...) asparagine glycan is attached at Asn329. Residue Glu338 is the Proton donor of the active site. Thr449 contributes to the Ca(2+) binding site.

This sequence belongs to the glycosyl hydrolase 47 family. Ca(2+) serves as cofactor.

The protein localises to the golgi apparatus membrane. The catalysed reaction is N(4)-(alpha-D-Man-(1-&gt;2)-alpha-D-Man-(1-&gt;2)-alpha-D-Man-(1-&gt;3)-[alpha-D-Man-(1-&gt;2)-alpha-D-Man-(1-&gt;3)-[alpha-D-Man-(1-&gt;2)-alpha-D-Man-(1-&gt;6)]-alpha-D-Man-(1-&gt;6)]-beta-D-Man-(1-&gt;4)-beta-D-GlcNAc-(1-&gt;4)-beta-D-GlcNAc)-L-asparaginyl-[protein] (N-glucan mannose isomer 9A1,2,3B1,2,3) + 4 H2O = N(4)-(alpha-D-Man-(1-&gt;3)-[alpha-D-Man-(1-&gt;3)-[alpha-D-Man-(1-&gt;6)]-alpha-D-Man-(1-&gt;6)]-beta-D-Man-(1-&gt;4)-beta-D-GlcNAc-(1-&gt;4)-beta-D-GlcNAc)-L-asparaginyl-[protein] (N-glucan mannose isomer 5A1,2) + 4 beta-D-mannose. It carries out the reaction N(4)-(alpha-D-Man-(1-&gt;2)-alpha-D-Man-(1-&gt;2)-alpha-D-Man-(1-&gt;3)-[alpha-D-Man-(1-&gt;3)-[alpha-D-Man-(1-&gt;2)-alpha-D-Man-(1-&gt;6)]-alpha-D-Man-(1-&gt;6)]-beta-D-Man-(1-&gt;4)-beta-D-GlcNAc-(1-&gt;4)-beta-D-GlcNAc)-L-asparaginyl-[protein] (N-glucan mannose isomer 8A1,2,3B1,3) + 3 H2O = N(4)-(alpha-D-Man-(1-&gt;3)-[alpha-D-Man-(1-&gt;3)-[alpha-D-Man-(1-&gt;6)]-alpha-D-Man-(1-&gt;6)]-beta-D-Man-(1-&gt;4)-beta-D-GlcNAc-(1-&gt;4)-beta-D-GlcNAc)-L-asparaginyl-[protein] (N-glucan mannose isomer 5A1,2) + 3 beta-D-mannose. The protein operates within protein modification; protein glycosylation. Inhibited by both 1-deoxymannojirimycin and kifunensine. Its function is as follows. Involved in the maturation of Asn-linked oligosaccharides. Progressively trim alpha-1,2-linked mannose residues from Man(9)GlcNAc(2) to produce Man(5)GlcNAc(2). The polypeptide is Mannosyl-oligosaccharide 1,2-alpha-mannosidase IA (MAN1A1) (Oryctolagus cuniculus (Rabbit)).